The primary structure comprises 259 residues: Phosphate import ATP-binding protein PstB (259 aa).

The 242-residue stretch at 13–254 (IAVKNLNFFY…PTRKETEDYI (242 aa)) folds into the ABC transporter domain. ATP is bound at residue 45–52 (GPSGCGKS).

The protein belongs to the ABC transporter superfamily. Phosphate importer (TC 3.A.1.7) family. As to quaternary structure, the complex is composed of two ATP-binding proteins (PstB), two transmembrane proteins (PstC and PstA) and a solute-binding protein (PstS).

Its subcellular location is the cell inner membrane. It catalyses the reaction phosphate(out) + ATP + H2O = ADP + 2 phosphate(in) + H(+). Its function is as follows. Part of the ABC transporter complex PstSACB involved in phosphate import. Responsible for energy coupling to the transport system. In Albidiferax ferrireducens (strain ATCC BAA-621 / DSM 15236 / T118) (Rhodoferax ferrireducens), this protein is Phosphate import ATP-binding protein PstB.